An 88-amino-acid chain; its full sequence is Small ribosomal subunit protein bS20 (88 aa).

The disordered stretch occupies residues 1–28 (MANIKSQIKRNRQNEKRRLRNKSVKSSL). Residues 7-23 (QIKRNRQNEKRRLRNKS) are compositionally biased toward basic residues.

This sequence belongs to the bacterial ribosomal protein bS20 family.

Binds directly to 16S ribosomal RNA. In Salinispora tropica (strain ATCC BAA-916 / DSM 44818 / JCM 13857 / NBRC 105044 / CNB-440), this protein is Small ribosomal subunit protein bS20.